The chain runs to 302 residues: Ribosomal protein L11 methyltransferase (302 aa).

S-adenosyl-L-methionine-binding residues include Thr155, Gly176, Asp198, and Asn239.

It belongs to the methyltransferase superfamily. PrmA family.

Its subcellular location is the cytoplasm. It carries out the reaction L-lysyl-[protein] + 3 S-adenosyl-L-methionine = N(6),N(6),N(6)-trimethyl-L-lysyl-[protein] + 3 S-adenosyl-L-homocysteine + 3 H(+). Methylates ribosomal protein L11. This Caldicellulosiruptor saccharolyticus (strain ATCC 43494 / DSM 8903 / Tp8T 6331) protein is Ribosomal protein L11 methyltransferase.